We begin with the raw amino-acid sequence, 917 residues long: MGVEKRINDEEMQPLAERDDKSRDSIDSTSTASISLALLGGANGSAHGSRAARTRKSENQEKYHDDEEEGDLEEGFVPPAGGWSAPRKVSVIFTLIVTLCIAGWLVAFFVLLGRHKDSSKDAAVSQGESNIIPGIYSGGRGGKKLDLDGVLFGNWSPKSHDISWFPGPNGADGLLLEQGGDRNKAYLRVEDIRSRNPGNKADDTIVLMRESSFMVGKRLVRPSKVWPSPDLKTVLVMSDQRKNWRHSYTGNYWIFDVETQTGEPLDPESLDGGIQLASWSPNSDAIVFTRKNNMFIRRLPSKNVKQITTDGGTNLFYGIPDWVYEEEVFSDSSATWWDGDGKFVAFLRTNESRVPEYPVQYFIPNTNKPSRPSEENYPDIRKIKYPKAGAPNPVVNIQFFDVEKEEVFSVDVKDDLPDDDRLVIGVTWASNGNVLVRETNRESDRLSVVLIDAAKRAGKVVRSRNFSSLDGGWVEPSQTTHFVPADPKNGRPHDGYIETIPHDGFEHLAYFTPMDNSEPTVLTSGDWEVVDAPSAVDLKRGLVYFVAAKENPTERHIYTVKLDGSDLQPIVDTKSAGYYSISLSAGAGYALLKYEGPDIPWQKVISTPANEEKYEESIEKNPGLADMARKYALPSLHYQTITISGYELQVVERRPANFNPDKKYPVLFHLYGGPGSQTVTKKFKVDFQSYVASNLGYIVVTVDGRGTGFIGRKARCAVRGNLGHYEAIDQIETAKAWGKRSYVDAGRMAIWGWSYGGFMTLKTLEQDAGQTFQYGMAVAPVTDWRFYDSIYTERYMHTPQNNPEGYDRSAISNVTALDQAVRFMIVHGSGDDNVHIQNTLTLLDKLDLGSVKNFDVHVYPDSDHSIYFHNANKMVYQRLSDWLVNAFNGEWVKTRDPIPHKSLARRALGLINILRNG.

Residues 1 to 78 form a disordered region; that stretch reads MGVEKRINDE…EGDLEEGFVP (78 aa). The Cytoplasmic portion of the chain corresponds to 1–90; the sequence is MGVEKRINDE…GGWSAPRKVS (90 aa). Over residues 16–26 the composition is skewed to basic and acidic residues; it reads AERDDKSRDSI. The span at 27 to 49 shows a compositional bias: low complexity; it reads DSTSTASISLALLGGANGSAHGS. Over residues 55–65 the composition is skewed to basic and acidic residues; that stretch reads RKSENQEKYHD. The chain crosses the membrane as a helical; Signal-anchor for type II membrane protein span at residues 91–111; that stretch reads VIFTLIVTLCIAGWLVAFFVL. The Vacuolar portion of the chain corresponds to 112–917; the sequence is LGRHKDSSKD…LGLINILRNG (806 aa). Asn-350 and Asn-465 each carry an N-linked (GlcNAc...) asparagine glycan. Ser-754 functions as the Charge relay system in the catalytic mechanism. Asn-813 carries N-linked (GlcNAc...) asparagine glycosylation. Active-site charge relay system residues include Asp-831 and His-864.

It belongs to the peptidase S9B family.

The protein localises to the vacuole membrane. The catalysed reaction is Release of an N-terminal dipeptide, Xaa-Yaa-|-Zaa-, from a polypeptide, preferentially when Yaa is Pro, provided Zaa is neither Pro nor hydroxyproline.. Functionally, type IV dipeptidyl-peptidase which removes N-terminal dipeptides sequentially from polypeptides having unsubstituted N-termini provided that the penultimate residue is proline. The protein is Probable dipeptidyl-aminopeptidase B (DAPB) of Coccidioides posadasii (strain C735) (Valley fever fungus).